A 308-amino-acid polypeptide reads, in one-letter code: Maspardin (308 aa).

An AB hydrolase-1 domain is found at 87–159; it reads FCDGFRKLLD…NSFWLMPAFM (73 aa). S304 is modified (phosphoserine).

It belongs to the AB hydrolase superfamily. Interacts with CD4. Interacts with ALDH16A1.

It is found in the cytoplasm. In terms of biological role, may play a role as a negative regulatory factor in CD4-dependent T-cell activation. This is Maspardin (SPG21) from Pongo abelii (Sumatran orangutan).